Here is a 183-residue protein sequence, read N- to C-terminus: Helofensin-2 (183 aa).

The signal sequence occupies residues 1 to 26 (MQMDWLFIAVISGIGLLSSGVPGTQG). The stretch at 27 to 64 (AYTTEQCRALNGSCNFYACFPKNVIIGKCDWWGWSCCA) is one C(6)C(4)C(9)C(6)CC 1; approximate repeat. A C(6)C(4)C(9)C(6)CC 2; approximate repeat occupies 65–101 (RTPLERCTAKKGTCTKTGCTKTDTDHGPCDGGAQCCQ). One copy of the C(6)C(4)C(9)C(6)CC 3; approximate repeat lies at 102–139 (RDPVKYCKFHGNVCGRGKCPMDHIPIGEQCMPGYPCCK). One copy of the C(6)C(4)C(9)C(6)CC 4; approximate repeat lies at 140 to 177 (RDGPAYCKSKGGKCLRRCSQIVPTDIIGVCADGVPCCK).

This sequence belongs to the beta-defensin family. Helofensin subfamily. Expressed by the mandibular venom gland.

It localises to the secreted. Its function is as follows. Lethal toxin which possesses an inhibitory effect on direct electrical stimulation of the isolated hemi-diaphragm of mice. Neither hemorrhagic nor hemolytic activities are detected. Phospholipase A2 activity, proteolytic activity and arginine esterolytic activity are absent. The chain is Helofensin-2 from Heloderma suspectum cinctum (Banded Gila monster).